Reading from the N-terminus, the 317-residue chain is Protein phosphatase 1 regulatory subunit 3C (317 aa).

The PP1-binding motif signature appears at 84 to 87 (RVVF). Residues 141 to 263 (PSSDYLSFRD…YRIVHVQWKP (123 aa)) are interaction with EPM2A. The region spanning 149-257 (RDRFQKNFVC…NNEAQNYRIV (109 aa)) is the CBM21 domain.

As to quaternary structure, interacts with PPP1CC catalytic subunit of PP1 and associates with glycogen. Forms complexes with glycogen phosphorylase, glycogen synthase and phosphorylase kinase which is necessary for its regulation of PP1 activity. Also interacts with EPM2A/laforin. Ubiquitinated by NHLRC1/malin in a EPM2A/laforin-dependent manner.

Functionally, acts as a glycogen-targeting subunit for PP1 and regulates its activity. Activates glycogen synthase, reduces glycogen phosphorylase activity and limits glycogen breakdown. Dramatically increases basal and insulin-stimulated glycogen synthesis upon overexpression in a variety of cell types. The protein is Protein phosphatase 1 regulatory subunit 3C of Rattus norvegicus (Rat).